We begin with the raw amino-acid sequence, 491 residues long: Cytochrome P450 2F2 (491 aa).

Cys436 is a binding site for heme.

It belongs to the cytochrome P450 family. Heme serves as cofactor.

It localises to the endoplasmic reticulum membrane. The protein localises to the microsome membrane. Involved in the regio- and stereoselective transformation of naphthalene to trans-1R-hydroxy-2R-glutathionyl-1,2-dihydronaphthalene in the presence of glutathione and glutathione S-transferases. It specifically catalyzes the production of a very reactive and potentially toxic intermediate, the 2R,2S arene oxide, that is associated with necrosis of the unciliated bronchiolar epithelial cells or club cells in lung. The protein is Cytochrome P450 2F2 (Cyp2f2) of Rattus norvegicus (Rat).